Consider the following 279-residue polypeptide: Thymidylate synthase (279 aa).

132-133 (RR) is a binding site for dUMP. Catalysis depends on cysteine 153, which acts as the Nucleophile. DUMP-binding positions include 178–181 (RSND), asparagine 189, and 219–221 (HIY). (6R)-5,10-methylene-5,6,7,8-tetrahydrofolate is bound at residue aspartate 181. Residue alanine 278 participates in (6R)-5,10-methylene-5,6,7,8-tetrahydrofolate binding.

Belongs to the thymidylate synthase family. Bacterial-type ThyA subfamily. Homodimer.

It localises to the cytoplasm. It catalyses the reaction dUMP + (6R)-5,10-methylene-5,6,7,8-tetrahydrofolate = 7,8-dihydrofolate + dTMP. It participates in pyrimidine metabolism; dTTP biosynthesis. In terms of biological role, catalyzes the reductive methylation of 2'-deoxyuridine-5'-monophosphate (dUMP) to 2'-deoxythymidine-5'-monophosphate (dTMP) while utilizing 5,10-methylenetetrahydrofolate (mTHF) as the methyl donor and reductant in the reaction, yielding dihydrofolate (DHF) as a by-product. This enzymatic reaction provides an intracellular de novo source of dTMP, an essential precursor for DNA biosynthesis. This chain is Thymidylate synthase, found in Lactococcus lactis subsp. cremoris (strain SK11).